Consider the following 470-residue polypeptide: Argininosuccinate lyase (470 aa).

It belongs to the lyase 1 family. Argininosuccinate lyase subfamily.

The protein resides in the cytoplasm. The catalysed reaction is 2-(N(omega)-L-arginino)succinate = fumarate + L-arginine. It functions in the pathway amino-acid biosynthesis; L-arginine biosynthesis; L-arginine from L-ornithine and carbamoyl phosphate: step 3/3. The polypeptide is Argininosuccinate lyase (Cupriavidus pinatubonensis (strain JMP 134 / LMG 1197) (Cupriavidus necator (strain JMP 134))).